The sequence spans 261 residues: Uridine-cytidine kinase 2 (261 aa).

Residues 1-16 (MAGDSEQTLQNHQQPN) show a composition bias toward polar residues. A disordered region spans residues 1 to 24 (MAGDSEQTLQNHQQPNGGEPFLIG). A2 carries the post-translational modification N-acetylalanine. Position 27 to 35 (27 to 35 (GGTASGKSS)) interacts with ATP. 6 residues coordinate substrate: D84, Y112, H117, R166, R176, and Q184. D213 lines the ATP pocket. The segment at 236–261 (RQTNGCLNGYTPSRKRQASESSSRPH) is disordered. Phosphoserine is present on S254.

Belongs to the uridine kinase family. In terms of assembly, homotetramer. In terms of tissue distribution, according to PubMed:8812458; testis-specific. According to PubMed:11306702, placenta-specific.

It catalyses the reaction uridine + ATP = UMP + ADP + H(+). The catalysed reaction is cytidine + ATP = CMP + ADP + H(+). Its pathway is pyrimidine metabolism; CTP biosynthesis via salvage pathway; CTP from cytidine: step 1/3. It participates in pyrimidine metabolism; UMP biosynthesis via salvage pathway; UMP from uridine: step 1/1. Functionally, phosphorylates uridine and cytidine to uridine monophosphate and cytidine monophosphate. Does not phosphorylate deoxyribonucleosides or purine ribonucleosides. Can use ATP or GTP as a phosphate donor. Can also phosphorylate cytidine and uridine nucleoside analogs such as 6-azauridine, 5-fluorouridine, 4-thiouridine, 5-bromouridine, N(4)-acetylcytidine, N(4)-benzoylcytidine, 5-fluorocytidine, 2-thiocytidine, 5-methylcytidine, and N(4)-anisoylcytidine. The sequence is that of Uridine-cytidine kinase 2 (UCK2) from Homo sapiens (Human).